The sequence spans 1008 residues: Phytosulfokine receptor 1 (1008 aa).

Positions 1-25 (MRVHRFCVIVIFLTELLCFFYSSES) are cleaved as a signal peptide. N-linked (GlcNAc...) asparagine glycosylation is found at asparagine 55, asparagine 64, and asparagine 73. LRR repeat units lie at residues 75–98 (TGRV…SLGK), 99–123 (LDEI…IFNL), 124–148 (KNLQ…NLPA), 150–170 (QSFD…ICHN), 172–194 (TQIR…GFGK), 195–219 (CVLL…LFHL), 221–243 (RLNL…IRNL), 244–266 (SSLV…VFDE), 291–315 (SPSL…CTAM), 316–339 (IALN…LPDC), 341–362 (RLKN…SFKN), and 363–387 (FESL…GILQ). N-linked (GlcNAc...) asparagine glycosylation is present at asparagine 106. Asparagine 160, asparagine 170, and asparagine 187 each carry an N-linked (GlcNAc...) asparagine glycan. Asparagine 242 carries N-linked (GlcNAc...) asparagine glycosylation. Residue arginine 300 coordinates phytosulfokine. N-linked (GlcNAc...) asparagine glycans are attached at residues asparagine 301 and asparagine 311. Asparagine 346, serine 370, and serine 372 together coordinate phytosulfokine. N-linked (GlcNAc...) asparagine glycans are attached at residues asparagine 373, asparagine 378, and asparagine 391. 4 LRR repeats span residues 392–414 (LTTL…SLHF), 415–438 (EKLK…LSSS), 439–464 (NELQ…DFKA), and 466–486 (FYLD…LTKL). The phytosulfokine site is built by threonine 398, asparagine 424, and aspartate 445. N-linked (GlcNAc...) asparagine glycosylation is found at asparagine 472 and asparagine 493. Residue lysine 508 coordinates phytosulfokine. N-linked (GlcNAc...) asparagine glycosylation is found at asparagine 510 and asparagine 534. LRR repeat units lie at residues 521–545 (IFGF…EFGN), 546–570 (LKKL…LSGM), 571–594 (TSLE…LQQL), and 596–619 (FLSK…QFQT). Asparagine 606 and asparagine 622 each carry an N-linked (GlcNAc...) asparagine glycan. A helical membrane pass occupies residues 660–680 (MAIGIAFGSVFLLTLLSLIVL). Phosphothreonine is present on threonine 731. The 272-residue stretch at 734–1005 (FDQANIIGCG…PTTQQLVSWL (272 aa)) folds into the Protein kinase domain. Residues 740–748 (IGCGGFGMV) and lysine 762 each bind ATP. Phosphotyrosine occurs at positions 807 and 847. Aspartate 860 functions as the Proton acceptor in the catalytic mechanism. Residue tyrosine 902 is modified to Phosphotyrosine.

It belongs to the protein kinase superfamily. Ser/Thr protein kinase family. In terms of assembly, homo- and heterodimers with PSY1R. Heterodimers with the somatic embryogenesis receptor-like kinases (SERKs). PSK is not directly involved in PSKR-SERK interaction but stabilizes PSKR island domain for recruitment of a SERK. Part of a functional complex containing PSKR1, BAK1, CNGC17, and AHA. Interacts with AHA1, AHA2, and BAK1, but not with CNGC17 or BRI1. Mg(2+) serves as cofactor. It depends on Mn(2+) as a cofactor. As to expression, weakly expressed in roots, leaves, stems and flowers. Expressed in the primary and lateral roots, including root primordia and root tips, but not in the hypocotyl.

It localises to the cell membrane. It carries out the reaction L-seryl-[protein] + ATP = O-phospho-L-seryl-[protein] + ADP + H(+). It catalyses the reaction L-threonyl-[protein] + ATP = O-phospho-L-threonyl-[protein] + ADP + H(+). The enzyme catalyses GTP = 3',5'-cyclic GMP + diphosphate. CGMP suppresses kinase activity. In terms of biological role, phytosulfokine receptor with both a serine/threonine-protein kinase activity and a guanylate cyclase activity. Regulates, in response to phytosulfokine binding, a signaling cascade involved in plant cell differentiation, organogenesis, somatic embryogenesis, cellular proliferation and plant growth. Involved in plant immunity, with antagonistic effects on bacterial and fungal resistances. Not involved in PSY perception. CNGC17 and AHAs form a functional cation-translocating unit that is activated by PSKR1/BAK1 and possibly other BAK1/RLK complexes. This is Phytosulfokine receptor 1 from Arabidopsis thaliana (Mouse-ear cress).